A 391-amino-acid chain; its full sequence is Na(+)/H(+) antiporter NhaA (391 aa).

The next 11 helical transmembrane spans lie at 14–34 (AGGILLMAAVILAMIMANSPL), 59–79 (LIHWINDGLMALFFMLIGLEV), 95–115 (SLPTFAAIGGMIFPAAIYLIF), 124–144 (VGWAIPAATDIAFALGIMALL), 154–174 (VFLLALAIIDDLGVVVIIAMF), 177–197 (TDLSAISLVVAALAIVILVGL), 213–233 (LILWIAVLKSGVHATLAGVII), 261–281 (FVILPIFAFANAGVDLSGMSL), 292–312 (IALGLLLGKPLGVLLFSFVAV), 331–351 (VAVMCGIGFTMSMFISSLAFI), and 363–383 (LGILTGSIMSAVIGYFWLSKV).

The protein belongs to the NhaA Na(+)/H(+) (TC 2.A.33) antiporter family.

Its subcellular location is the cell inner membrane. The enzyme catalyses Na(+)(in) + 2 H(+)(out) = Na(+)(out) + 2 H(+)(in). Na(+)/H(+) antiporter that extrudes sodium in exchange for external protons. The sequence is that of Na(+)/H(+) antiporter NhaA from Shewanella loihica (strain ATCC BAA-1088 / PV-4).